A 314-amino-acid chain; its full sequence is Olfactory receptor 51G2 (314 aa).

Over 1–30 (MTLGSLGNSSSSVSATFLLSGIPGLERMHI) the chain is Extracellular. Residue N8 is glycosylated (N-linked (GlcNAc...) asparagine). Residues 31–51 (WISIPLCFMYLVSIPGNCTIL) traverse the membrane as a helical segment. Residues 52–59 (FIIKTERS) lie on the Cytoplasmic side of the membrane. Residues 60 to 80 (LHEPMYLFLSMLALIDLGLSL) traverse the membrane as a helical segment. At 81–104 (CTLPTVLGIFWVGAREISHDACFA) the chain is on the extracellular side. C102 and C194 form a disulfide bridge. Residues 105 to 125 (QLFFIHCFSFLESSVLLSMAF) form a helical membrane-spanning segment. The Cytoplasmic segment spans residues 126–144 (DRFVAICHPLHYVSILTNT). The helical transmembrane segment at 145–165 (VIGRIGLVSLGRSVALIFPLP) threads the bilayer. Residues 166–201 (FMLKRFPYCGSPVLSHSYCLHQEVMKLACADMKANS) lie on the Extracellular side of the membrane. The helical transmembrane segment at 202–222 (IYGMFVIVSTVGIDSLLILFS) threads the bilayer. Over 223 to 242 (YALILRTVLSIASRAERFKA) the chain is Cytoplasmic. The chain crosses the membrane as a helical span at residues 243–263 (LNTCVSHICAVLLFYTPMIGL). The Extracellular segment spans residues 264-278 (SVIHRFGKQAPHLVQ). Residues 279–299 (VVMGFMYLLFPPVMNPIVYSV) form a helical membrane-spanning segment. Topologically, residues 300-314 (KTKQIRDRVTHAFCY) are cytoplasmic.

It belongs to the G-protein coupled receptor 1 family.

It localises to the cell membrane. Its function is as follows. Odorant receptor. The chain is Olfactory receptor 51G2 (OR51G2) from Homo sapiens (Human).